The following is a 1583-amino-acid chain: MEAGSVVRAIFDFCPSVSEELPLFVGDIIEVLAVVDEFWLLGKKEDVTGQFPSSFVEIVTIPSLKEGERLFVCISEFTSQELNSLPLHRGDLVILDDAPTASWLQGRSCWGARGFFPSSCVRELCLSSQSRRWHSQSALLQIPEYSMGQARALMGLSAQLDEELDFREGDVITIIGVPEPGWFEGELEGRRGIFPEGFVELLGPLRTVDELVSSGNHNDCIINGEEETPTGEEERGPEEDEEQPGTYGIALYRFQALEPNELDFEVGDKIRILGTLEDGWLEGSLKGRTGIFPYRFVKLFSKTRAEETMDLPKESSPTEIPDTSLDCRENPLVVEGRHKSPEYKAEKSNCVISETSASPLEHLTSECEVHKSSHQDEGTSRGPPRSPGWGHEQPLARHSPAEDPSETINGVSSQSQVPFRPRWQQNQYYSTTGRGHLSTEQYSDPLPLEAKAKDYSSRPPRGMYSPPKTFQKPVPSPHGSSCPLAPRVVRPSLLSSQLQSMVRGAKKYHTPKENASSFCSASERSEVKAGLQDRAFTADLIALGQGGGHTDLDSKLTQQLVEFEKSLSGPGAEPEAILRHFSIMNFNSEKDIVRGSSKSITPQELPERRRALRPPPPRPSTPASTSPHVLLDQNLKPEPPLAMRPSRPAPLPPSAQHRVTAVTPGLLTPGLFTHESCESPEKEGPENLDQTLDQTSQCPLVLVRIQEMEQDLDMCSPAPEEPNLTLEEKQDESLRAETPEDLEFYESNIESLNMELQQLREMTLLSSQSSSPVAPPGSMYTENPEQRMLEKRAKVIEELLQTERDYVRDLEMCIEHIMAPLQQTQIPNIDFEGLFGNMQMVIKVSKQLLADLEISDAVGPVFLDHRDELEGTYKVYCQNHDEAISLLEIYEKDEKIQKHLQDSLADLKSLYTEWGCTNYINLGSFLIKPVQRVMRYPLLLMELLNSTPESHPDKAPLTSAVLAVKEINVNINEYKRRKDLVLKYRKGDEDSLMEKISKLNIHSIIKKSNRVSSHLKHLTGFAPQIKDEAFEETEKNFRMQERLIKSFIRDLSLYLQHIRESACVKVVAAVSMWDVCMEKGHRDLEQFEKVHRYISDQLFTNFKERTERLVISPLNQLLSMFTGPHKLVQKRFDKLLDFYNCTERAEKLKDKKTLEELQSARNNYEALNAQLLDELPKFHQYAQGLFTNCIHGYAEAHCDFVRQALEQLKPLLSLLKVAGREGNLIAIFHEEHSRVLQQLQVFTFFPESLPAARKPFERKTLDRQSARKPLLGLPSYMLQSEELRASLLTRYPPEKLFQAERNFNAAQDLDVSLLEGDLVGVIKKKDPMGSQNRWLIDNGVSQGFVYSSFLKPYNTRRSHSDVSVGSHSSTESEQSSSSPRFPRQNSSGTLTFNPGSMAVSFTSGSCQKQPQDATSPKELGQEILSASSNLGCSESSPSRCPSDPDSSPQPRSWDSPEAARDISQPAPALRGYRNSRHPEIGGYSLPGRNGQGKDLTKGCARTTQALEDKNEEPESREAEGNQVYFAVYTFKARNPNELSVSANQRLKILEFKDVTGNTEWWLAEVNGKKGYVPSNYIRKAEYT.

M1 bears the N-acetylmethionine mark. SH3 domains lie at 2–61 (EAGS…IVTI), 66–126 (EGER…ELCL), 145–204 (YSMG…LLGP), and 243–302 (QPGT…LFSK). Disordered stretches follow at residues 217–244 (HNDCIINGEEETPTGEEERGPEEDEEQP), 306–329 (EETMDLPKESSPTEIPDTSLDCRE), and 366–464 (ECEV…RGMY). Residues 224-243 (GEEETPTGEEERGPEEDEEQ) are compositionally biased toward acidic residues. Residues 366–379 (ECEVHKSSHQDEGT) are compositionally biased toward basic and acidic residues. Residues 406-442 (ETINGVSSQSQVPFRPRWQQNQYYSTTGRGHLSTEQY) show a composition bias toward polar residues. Position 495 is a phosphoserine (S495). Disordered stretches follow at residues 594–656 (RGSS…PSAQ) and 671–693 (LFTHESCESPEKEGPENLDQTLD). Residues 637–653 (PEPPLAMRPSRPAPLPP) are compositionally biased toward pro residues. Over residues 675-685 (ESCESPEKEGP) the composition is skewed to basic and acidic residues. Residues 742–762 (LEFYESNIESLNMELQQLREM) adopt a coiled-coil conformation. The region spanning 791 to 974 (KRAKVIEELL…KEINVNINEY (184 aa)) is the DH domain. A BAR domain is found at 1015–1224 (LKHLTGFAPQ…LKVAGREGNL (210 aa)). The SH3 5 domain maps to 1292 to 1355 (PPEKLFQAER…YSSFLKPYNT (64 aa)). Residues 1357–1496 (RSHSDVSVGS…GRNGQGKDLT (140 aa)) are disordered. A compositionally biased stretch (low complexity) spans 1361–1387 (DVSVGSHSSTESEQSSSSPRFPRQNSS). Over residues 1388–1414 (GTLTFNPGSMAVSFTSGSCQKQPQDAT) the composition is skewed to polar residues. Positions 1433 to 1456 (SESSPSRCPSDPDSSPQPRSWDSP) are enriched in low complexity. The region spanning 1519–1582 (EGNQVYFAVY…PSNYIRKAEY (64 aa)) is the SH3 6 domain.

As to quaternary structure, binds DNM1 via its N-terminal SH3 domains. The C-terminal SH3 domain binds a complex containing actin, tubulin, Hsp70 and actin-regulatory proteins, such as ENAH, EVL, WIRE, CR16, WAVE1 and NAP1L1. Interacts with FASLG. Interacts (via SH3 domain 6) with WASL. Interacts (via SH3 domain 6) interacts with ENAH. Interacts (via C-terminal domain) with TJP1; required for the apical cell-cell junction localization of DNMBP.

The protein localises to the cytoplasm. The protein resides in the golgi apparatus. Its subcellular location is the golgi stack. It is found in the cytoskeleton. It localises to the synapse. The protein localises to the cell junction. Functionally, plays a critical role as a guanine nucleotide exchange factor (GEF) for CDC42 in several intracellular processes associated with the actin and microtubule cytoskeleton. Regulates the structure of apical junctions in epithelial cells. Participates in the normal lumenogenesis of epithelial cell cysts by regulating spindle orientation. Plays a key role in ciliogenesis and cyst formation. May play a role in membrane trafficking between the cell surface and the Golgi. In Canis lupus familiaris (Dog), this protein is Dynamin-binding protein.